The sequence spans 254 residues: PAXIP1-associated glutamate-rich protein 1 (254 aa).

Disordered regions lie at residues 1-111 (MSLA…PPSE) and 127-254 (LQAE…QRKY). Residues 45 to 62 (KAEDEGEGGREETEREGS) are compositionally biased toward basic and acidic residues. Residues 78 to 98 (EPAEEDSEDWCVPCSDEEVEL) show a composition bias toward acidic residues. The segment at 116 to 160 (YELLAAHGTLELQAEILPRRPPTPEAQSEEERSDEEPEAKEEEEE) is sufficient for interaction with NCOA1. A Phosphothreonine modification is found at Thr-138. Acidic residues predominate over residues 142–159 (QSEEERSDEEPEAKEEEE). 2 positions are modified to phosphoserine: Ser-143 and Ser-148. The sufficient for interaction with ESR1 stretch occupies residues 161–254 (KPHMPTEFDF…SSLFPRQRKY (94 aa)). Residues 195–223 (QKREARLDKVLSDMKRHKKLEEQILRTGR) show a composition bias toward basic and acidic residues. Ser-237 is modified (phosphoserine).

Component of the KMT2 family MLL2/MLL3 complex (also named ASCOM complex), at least composed of the HMTs KMT2D and/or KMT2C, the common subunits ASH2L, RBBP5, WDR5 and DPY30, and the complex type-specific subunits PAXIP1/PTIP, PAGR1, NCOA6 and KDM6A; PAXIP1 is required for the association with the MLL2/MLL3 complex. Forms a constitutive complex with PAXIP1/PTIP independently of the MLL2/MLL3 complex. Interacts with NCOA1, ESR1, NR3C1, AR. Ubiquitously expressed.

The protein localises to the nucleus. In terms of biological role, its association with the histone methyltransferase MLL2/MLL3 complex is suggesting a role in epigenetic transcriptional activation. However, in association with PAXIP1/PTIP is proposed to function at least in part independently of the MLL2/MLL3 complex. Proposed to be recruited by PAXIP1 to sites of DNA damage where the PAGR1:PAXIP1 complex is required for cell survival in response to DNA damage independently of the MLL2/MLL3 complex. However, its function in DNA damage has been questioned. During immunoglobulin class switching in activated B-cells is involved in transcription regulation of downstream switch regions at the immunoglobulin heavy-chain (Igh) locus independently of the MLL2/MLL3 complex. Involved in both estrogen receptor-regulated gene transcription and estrogen-stimulated G1/S cell-cycle transition. Acts as a transcriptional cofactor for nuclear hormone receptors. Inhibits the induction properties of several steroid receptors such as NR3C1, AR and PPARG; the mechanism of inhibition appears to be gene-dependent. The protein is PAXIP1-associated glutamate-rich protein 1 (PAGR1) of Homo sapiens (Human).